The sequence spans 92 residues: Serine protease inhibitor I/II (92 aa).

A signal peptide spans 1–19 (MKLALALCAAFLLVVLVQA). Pacifastin domains are found at residues 20–54 (EQEC…CPPH) and 57–92 (EVTC…CPQK). 6 cysteine pairs are disulfide-bonded: C23/C38, C33/C51, C36/C46, C60/C75, C70/C89, and C73/C84.

This sequence belongs to the protease inhibitor I19 family. In terms of tissue distribution, expressed in hemolymph, ovaries, testes and fat body of adults but are absent in the gut. Also present in larval hemolymph and fat body.

The protein localises to the secreted. In vitro, is active against alpha-chymotrypsin and trypsin. Its function is as follows. In vitro, is active against alpha-chymotrypsin and pancreatic elastase. The protein is Serine protease inhibitor I/II of Schistocerca gregaria (Desert locust).